A 283-amino-acid polypeptide reads, in one-letter code: MRTQWPSPAKLNLFLYITGQRADGYHTLQTLFQFLDYGDTISIELRDDGDIRLLTPVEGVEHEDNLIVRAARLLIKTAADSGRLPTGSGANISIDKRLPMGGGLGGGSSNAATVLVALNYLWQCGLSMDELAEMGLTLGADVPVFVRGHAAFAEGVGEILTPVDPPEKWYLVAHPGVSIPTPVIFKDPELPRNTPKRSIETLLKCEFSNDCEVIARKRFREVDAVLSWLLEYAPSRLTGTGACVFAEFDTESEARQVLEQAPEWLNGFVAKGVNLSPLHRAML.

Lys-10 is a catalytic residue. 99-109 contributes to the ATP binding site; sequence PMGGGLGGGSS. Asp-141 is a catalytic residue.

The protein belongs to the GHMP kinase family. IspE subfamily. As to quaternary structure, homodimer.

The catalysed reaction is 4-CDP-2-C-methyl-D-erythritol + ATP = 4-CDP-2-C-methyl-D-erythritol 2-phosphate + ADP + H(+). The protein operates within isoprenoid biosynthesis; isopentenyl diphosphate biosynthesis via DXP pathway; isopentenyl diphosphate from 1-deoxy-D-xylulose 5-phosphate: step 3/6. In terms of biological role, catalyzes the phosphorylation of the position 2 hydroxy group of 4-diphosphocytidyl-2C-methyl-D-erythritol. In Escherichia coli (strain 55989 / EAEC), this protein is 4-diphosphocytidyl-2-C-methyl-D-erythritol kinase.